A 232-amino-acid polypeptide reads, in one-letter code: Octanoyltransferase (232 aa).

Positions 44–219 (EHTGDELWVV…QLARQFGLVL (176 aa)) constitute a BPL/LPL catalytic domain. Residues 83–90 (RGGQVTYH), 150–152 (ALG), and 163–165 (GLS) each bind substrate. Cysteine 181 acts as the Acyl-thioester intermediate in catalysis.

It belongs to the LipB family.

The protein resides in the cytoplasm. The enzyme catalyses octanoyl-[ACP] + L-lysyl-[protein] = N(6)-octanoyl-L-lysyl-[protein] + holo-[ACP] + H(+). The protein operates within protein modification; protein lipoylation via endogenous pathway; protein N(6)-(lipoyl)lysine from octanoyl-[acyl-carrier-protein]: step 1/2. Functionally, catalyzes the transfer of endogenously produced octanoic acid from octanoyl-acyl-carrier-protein onto the lipoyl domains of lipoate-dependent enzymes. Lipoyl-ACP can also act as a substrate although octanoyl-ACP is likely to be the physiological substrate. The chain is Octanoyltransferase from Xanthomonas campestris pv. campestris (strain B100).